Consider the following 838-residue polypeptide: Tuftelin-interacting protein 11 (838 aa).

Residues Met1–His13 are compositionally biased toward basic and acidic residues. A required for interaction with DHX15 region spans residues Met1 to Thr51. Disordered stretches follow at residues Met1 to Asp74 and Leu86 to Thr137. Phosphoserine is present on Ser2. Residues Leu14–Asp29 are compositionally biased toward acidic residues. The span at Gln45–Pro65 shows a compositional bias: basic and acidic residues. 3 positions are modified to phosphoserine: Ser60, Ser96, and Ser99. Acidic residues predominate over residues Glu92 to Ala101. The segment covering Glu102–Pro117 has biased composition (basic and acidic residues). The residue at position 145 (Ser145) is a Phosphoserine. Residues Thr150 to Ser196 enclose the G-patch domain. The segment at Ala193–Pro237 is disordered. Phosphoserine is present on Ser211. Over residues Glu218–Gly232 the composition is skewed to basic and acidic residues. The short motif at Val701–Asn706 is the Nuclear localization signal element. The tract at residues Ile711–Leu735 is required for nuclear speckle localization.

The protein belongs to the TFP11/STIP family. Identified in the spliceosome C complex. Found in the Intron Large (IL) complex, a post-mRNA release spliceosomal complex containing the excised intron, U2, U5 and U6 snRNPs, and splicing factors. Interacts with TUFT1. Interacts with DHX15; indicative for a recruitment of DHX15 to the IL complex. Interacts with GCFC2. Widely expressed. In tooth it is expressed in ameloblasts and odontoblasts.

It localises to the cytoplasm. Its subcellular location is the nucleus. In terms of biological role, involved in pre-mRNA splicing, specifically in spliceosome disassembly during late-stage splicing events. Intron turnover seems to proceed through reactions in two lariat-intron associated complexes termed Intron Large (IL) and Intron Small (IS). In cooperation with DHX15 seems to mediate the transition of the U2, U5 and U6 snRNP-containing IL complex to the snRNP-free IS complex leading to efficient debranching and turnover of excised introns. May play a role in the differentiation of ameloblasts and odontoblasts or in the forming of the enamel extracellular matrix. The polypeptide is Tuftelin-interacting protein 11 (Tfip11) (Mus musculus (Mouse)).